A 413-amino-acid chain; its full sequence is ORC1-type DNA replication protein 10 (413 aa).

ATP contacts are provided by residues 63-67, Tyr211, and Arg223; that span reads VGKTA.

The protein belongs to the CDC6/cdc18 family.

Involved in regulation of DNA replication. The protein is ORC1-type DNA replication protein 10 (orc10) of Halobacterium salinarum (strain ATCC 700922 / JCM 11081 / NRC-1) (Halobacterium halobium).